The primary structure comprises 230 residues: Small ribosomal subunit protein uS3 (230 aa).

The KH type-2 domain occupies 39 to 107 (VRNYLFKKLI…PVHINIEEIK (69 aa)).

It belongs to the universal ribosomal protein uS3 family. In terms of assembly, part of the 30S ribosomal subunit. Forms a tight complex with proteins S10 and S14.

Its function is as follows. Binds the lower part of the 30S subunit head. Binds mRNA in the 70S ribosome, positioning it for translation. In Vesicomyosocius okutanii subsp. Calyptogena okutanii (strain HA), this protein is Small ribosomal subunit protein uS3.